The chain runs to 379 residues: Zinc metalloproteinase nas-20 (379 aa).

The first 20 residues, methionine 1 to serine 20, serve as a signal peptide directing secretion. A propeptide spanning residues aspartate 21 to arginine 29 is cleaved from the precursor. The Peptidase M12A domain occupies glutamine 30 to asparagine 208. N-linked (GlcNAc...) asparagine glycosylation is present at asparagine 67. Cystine bridges form between cysteine 70–cysteine 207, cysteine 91–cysteine 111, cysteine 209–cysteine 229, and cysteine 234–cysteine 243. Histidine 119 contributes to the Zn(2+) binding site. The active site involves glutamate 120. Zn(2+)-binding residues include histidine 123 and histidine 129. Asparagine 185 is a glycosylation site (N-linked (GlcNAc...) asparagine). One can recognise an EGF-like domain in the interval lysine 203–aspartate 244. Asparagine 337 and asparagine 370 each carry an N-linked (GlcNAc...) asparagine glycan.

It depends on Zn(2+) as a cofactor.

The protein resides in the secreted. Functionally, metalloprotease. This Caenorhabditis elegans protein is Zinc metalloproteinase nas-20 (nas-20).